The primary structure comprises 118 residues: Putative membrane protein insertion efficiency factor (118 aa).

The disordered stretch occupies residues 76 to 118 (WDPVPQRRPRRRDAAAADAAMSAPHACKGSPHAVVGDTNDGST). The segment covering 91–101 (AADAAMSAPHA) has biased composition (low complexity).

It belongs to the UPF0161 family.

The protein localises to the cell membrane. In terms of biological role, could be involved in insertion of integral membrane proteins into the membrane. The chain is Putative membrane protein insertion efficiency factor from Nocardia farcinica (strain IFM 10152).